Reading from the N-terminus, the 302-residue chain is Acetaldehyde dehydrogenase (302 aa).

An NAD(+)-binding site is contributed by 12–15 (SGNI). C127 functions as the Acyl-thioester intermediate in the catalytic mechanism. Residues 158 to 166 (SAGPGTRQN) and N276 each bind NAD(+).

The protein belongs to the acetaldehyde dehydrogenase family.

It catalyses the reaction acetaldehyde + NAD(+) + CoA = acetyl-CoA + NADH + H(+). The polypeptide is Acetaldehyde dehydrogenase (nahO) (Geobacillus genomosp. 3).